A 256-amino-acid polypeptide reads, in one-letter code: Major prion protein (256 aa).

A signal peptide spans 1 to 24 (MVKSHIGSWILVLFVAMWSDVGLC). The tract at residues 25–233 (KKRPKPGGGW…ESQAYYQRGA (209 aa)) is interaction with GRB2, ERI3 and SYN1. A disordered region spans residues 28–110 (PKPGGGWNTG…QWNKPSKPKT (83 aa)). 5 repeat units span residues 54-62 (PQGGGGWGQ), 63-70 (PHGGGWGQ), 71-78 (PHGGGWGQ), 79-86 (PHGGGWGQ), and 87-95 (PHGGGGWGQ). Positions 54–95 (PQGGGGWGQPHGGGWGQPHGGGWGQPHGGGWGQPHGGGGWGQ) are 5 X 8 AA tandem repeats of P-H-G-G-G-W-G-Q. A compositionally biased stretch (gly residues) spans 55–97 (QGGGGWGQPHGGGWGQPHGGGWGQPHGGGWGQPHGGGGWGQGG). His-64, Gly-65, Gly-66, His-72, Gly-73, Gly-74, His-80, Gly-81, Gly-82, His-88, Gly-90, and Gly-91 together coordinate Cu(2+). A disulfide bridge connects residues Cys-182 and Cys-217. N-linked (GlcNAc...) asparagine glycosylation is found at Asn-184 and Asn-200. Ala-233 is lipidated: GPI-anchor amidated alanine. The propeptide at 234–256 (SVILFSSPPVILLISFLIFLIVG) is removed in mature form.

The protein belongs to the prion family. As to quaternary structure, monomer and homodimer. Has a tendency to aggregate into amyloid fibrils containing a cross-beta spine, formed by a steric zipper of superposed beta-strands. Soluble oligomers may represent an intermediate stage on the path to fibril formation. Copper binding may promote oligomerization. Interacts with GRB2, APP, ERI3/PRNPIP and SYN1. Mislocalized cytosolically exposed PrP interacts with MGRN1; this interaction alters MGRN1 subcellular location and causes lysosomal enlargement. Interacts with KIAA1191.

It localises to the cell membrane. The protein resides in the golgi apparatus. Functionally, its primary physiological function is unclear. Has cytoprotective activity against internal or environmental stresses. May play a role in neuronal development and synaptic plasticity. May be required for neuronal myelin sheath maintenance. May play a role in iron uptake and iron homeostasis. Soluble oligomers are toxic to cultured neuroblastoma cells and induce apoptosis (in vitro). Association with GPC1 (via its heparan sulfate chains) targets PRNP to lipid rafts. Also provides Cu(2+) or Zn(2+) for the ascorbate-mediated GPC1 deaminase degradation of its heparan sulfate side chains. This chain is Major prion protein (PRNP), found in Budorcas taxicolor (Golden takin).